Here is a 1028-residue protein sequence, read N- to C-terminus: Pro-apoptotic serine protease nma111 (1028 aa).

The interval 1 to 46 (MDLNGETSTKRKRSSVAAPAERPAKHLKPGNSTLTPGDATPANGTV) is disordered. Positions 82–266 (VVSIHFCQTC…AATDYFLPLD (185 aa)) are serine protease. Residues histidine 120, aspartate 151, and serine 233 each act as charge relay system in the active site. 2 consecutive PDZ domains span residues 289–374 (QWIL…LLVQ) and 876–957 (VFCG…VTFD). Basic and acidic residues predominate over residues 991–1001 (SHERDRHKDGI). A disordered region spans residues 991 to 1028 (SHERDRHKDGITPDAANLNPDAMDEVYEEVSDVEPEVD). Over residues 1012–1028 (AMDEVYEEVSDVEPEVD) the composition is skewed to acidic residues.

This sequence belongs to the peptidase S1C family.

The protein localises to the nucleus. Nuclear serine protease which mediates apoptosis. The sequence is that of Pro-apoptotic serine protease nma111 (nma111) from Aspergillus fumigatus (strain ATCC MYA-4609 / CBS 101355 / FGSC A1100 / Af293) (Neosartorya fumigata).